A 238-amino-acid chain; its full sequence is Arginine ABC transporter permease protein ArtQ (238 aa).

The Periplasmic portion of the chain corresponds to 1-14 (MNEFFPLASAAGMT). An ABC transmembrane type-1 domain is found at 11–223 (AGMTVGLAVC…VITLLSQYIL (213 aa)). Residues 15–35 (VGLAVCALIVGLALAMFFAVW) form a helical membrane-spanning segment. The Cytoplasmic portion of the chain corresponds to 36 to 48 (ESAKWRPVAWAGS). The helical transmembrane segment at 49-69 (ALVTILRGLPEILVVLFIYFG) threads the bilayer. Residues 70-98 (SSQLLLTLSDGFTINLGFVQIPVQMDIEN) lie on the Periplasmic side of the membrane. The helical transmembrane segment at 99–119 (FDVSPFLCGVIALSLLYAAYA) threads the bilayer. Residues 120–168 (SQTLRGALKAVPVGQWESGQALGLSKSAIFFRLVMPQMWRHALPGLGNQ) are Cytoplasmic-facing. A helical transmembrane segment spans residues 169–189 (WLVLLKDTALVSLISVNDLML). Over 190–201 (QTKSIATRTQEP) the chain is Periplasmic. Residues 202–222 (FTWYIVAAAIYLVITLLSQYI) form a helical membrane-spanning segment. Over 223-238 (LKRIDLRATRFERRPS) the chain is Cytoplasmic.

Belongs to the binding-protein-dependent transport system permease family. HisMQ subfamily. As to quaternary structure, the complex is composed of two ATP-binding proteins (ArtP), two transmembrane proteins (ArtM and ArtQ) and two solute-binding proteins (ArtJ and ArtI).

It is found in the cell inner membrane. In terms of biological role, part of the ABC transporter complex ArtPIQMJ involved in arginine transport. Probably responsible for the translocation of the substrate across the membrane. This is Arginine ABC transporter permease protein ArtQ (artQ) from Escherichia coli O6:H1 (strain CFT073 / ATCC 700928 / UPEC).